The primary structure comprises 152 residues: Putative RRN3-like protein RRN3P1 (152 aa).

The protein belongs to the RRN3 family.

The sequence is that of Putative RRN3-like protein RRN3P1 (RRN3P1) from Homo sapiens (Human).